The following is a 155-amino-acid chain: Aspartate carbamoyltransferase regulatory chain (155 aa).

Cys-111, Cys-116, Cys-137, and Cys-140 together coordinate Zn(2+).

This sequence belongs to the PyrI family. Contains catalytic and regulatory chains. Zn(2+) is required as a cofactor.

In terms of biological role, involved in allosteric regulation of aspartate carbamoyltransferase. The chain is Aspartate carbamoyltransferase regulatory chain from Haloarcula marismortui (strain ATCC 43049 / DSM 3752 / JCM 8966 / VKM B-1809) (Halobacterium marismortui).